Reading from the N-terminus, the 378-residue chain is UPF0754 membrane protein BCG9842_B4423 (378 aa).

Residues 357-377 (YLGALLGGIIGLVQGLLLLFL) traverse the membrane as a helical segment.

This sequence belongs to the UPF0754 family.

Its subcellular location is the cell membrane. This is UPF0754 membrane protein BCG9842_B4423 from Bacillus cereus (strain G9842).